A 517-amino-acid polypeptide reads, in one-letter code: Maturase K (517 aa).

It belongs to the intron maturase 2 family. MatK subfamily.

It is found in the plastid. The protein localises to the chloroplast. Its function is as follows. Usually encoded in the trnK tRNA gene intron. Probably assists in splicing its own and other chloroplast group II introns. The protein is Maturase K of Palhinhaea cernua (Nodding clubmoss).